Consider the following 559-residue polypeptide: CTP synthase (559 aa).

Residues 1 to 283 are amidoligase domain; sequence MSTSRTTTNN…DTFLIRRLDL (283 aa). A CTP-binding site is contributed by serine 25. Serine 25 contacts UTP. ATP is bound by residues 26–31 and aspartate 83; that span reads SLGKGL. Positions 83 and 157 each coordinate Mg(2+). CTP is bound by residues 164 to 166, 204 to 209, and lysine 240; these read DIE and KTKPTQ. Residues 204 to 209 and lysine 240 each bind UTP; that span reads KTKPTQ. The Glutamine amidotransferase type-1 domain maps to 308–557; it reads TVGIVGKYVD…VAAALAAAVT (250 aa). Glycine 371 lines the L-glutamine pocket. The active-site Nucleophile; for glutamine hydrolysis is cysteine 398. L-glutamine-binding positions include 399–402, glutamate 421, and arginine 482; that span reads LGLQ. Residues histidine 530 and glutamate 532 contribute to the active site.

Belongs to the CTP synthase family. Homotetramer.

It catalyses the reaction UTP + L-glutamine + ATP + H2O = CTP + L-glutamate + ADP + phosphate + 2 H(+). The catalysed reaction is L-glutamine + H2O = L-glutamate + NH4(+). The enzyme catalyses UTP + NH4(+) + ATP = CTP + ADP + phosphate + 2 H(+). Its pathway is pyrimidine metabolism; CTP biosynthesis via de novo pathway; CTP from UDP: step 2/2. With respect to regulation, allosterically activated by GTP, when glutamine is the substrate; GTP has no effect on the reaction when ammonia is the substrate. The allosteric effector GTP functions by stabilizing the protein conformation that binds the tetrahedral intermediate(s) formed during glutamine hydrolysis. Inhibited by the product CTP, via allosteric rather than competitive inhibition. Its function is as follows. Catalyzes the ATP-dependent amination of UTP to CTP with either L-glutamine or ammonia as the source of nitrogen. Regulates intracellular CTP levels through interactions with the four ribonucleotide triphosphates. In Corynebacterium efficiens (strain DSM 44549 / YS-314 / AJ 12310 / JCM 11189 / NBRC 100395), this protein is CTP synthase.